Reading from the N-terminus, the 202-residue chain is LexA repressor (202 aa).

The H-T-H motif DNA-binding region spans 28-48 (RAEIAQRLGFRSPNAAEEHLK). Residues Ser-119 and Lys-156 each act as for autocatalytic cleavage activity in the active site.

This sequence belongs to the peptidase S24 family. Homodimer.

It catalyses the reaction Hydrolysis of Ala-|-Gly bond in repressor LexA.. Functionally, represses a number of genes involved in the response to DNA damage (SOS response), including recA and lexA. Binds to the 16 bp palindromic sequence 5'-CTGTATATATATACAG-3'. In the presence of single-stranded DNA, RecA interacts with LexA causing an autocatalytic cleavage which disrupts the DNA-binding part of LexA, leading to derepression of the SOS regulon and eventually DNA repair. The protein is LexA repressor of Salmonella agona (strain SL483).